The chain runs to 482 residues: ATP-dependent rRNA helicase rrp3 (482 aa).

The segment at 1-55 (MSSVKRRKTEKNTSSGLKSKQAKEPKEASPLSSPEPTEENQNNEIEEGTEEEEVT) is disordered. Over residues 44–53 (EIEEGTEEEE) the composition is skewed to acidic residues. The short motif at 56–84 (KSFKDLGIVDSLCEACDTLGYKAPTPIQR) is the Q motif element. The Helicase ATP-binding domain maps to 87–258 (IPLALQGRDL…RASLKDPLRV (172 aa)). 100-107 (AETGSGKT) is an ATP binding site. The DEAD box motif lies at 206 to 209 (DEAD). The Helicase C-terminal domain maps to 282-430 (HKDTYLIYLL…EYQTVKDEVM (149 aa)). Composition is skewed to basic and acidic residues over residues 444–456 (RNEMKNLHEDRGK) and 472–482 (RGRDEMDREEG). Residues 444–482 (RNEMKNLHEDRGKKGAVLKGRRPANGAKRGRDEMDREEG) form a disordered region.

The protein belongs to the DEAD box helicase family. DDX47/RRP3 subfamily. Interacts with the SSU processome.

The protein localises to the nucleus. The enzyme catalyses ATP + H2O = ADP + phosphate + H(+). Its function is as follows. ATP-dependent rRNA helicase required for pre-ribosomal RNA processing. Involved in the maturation of the 35S-pre-rRNA and to its cleavage to mature 18S rRNA. This chain is ATP-dependent rRNA helicase rrp3, found in Sclerotinia sclerotiorum (strain ATCC 18683 / 1980 / Ss-1) (White mold).